Reading from the N-terminus, the 223-residue chain is Thymidine kinase (223 aa).

Residues 19 to 26 and 96 to 99 contribute to the ATP site; these read GPMFAGKT and DEVQ. Catalysis depends on Glu-97, which acts as the Proton acceptor. Cys-153, Cys-156, Cys-191, and His-194 together coordinate Zn(2+).

Belongs to the thymidine kinase family. As to quaternary structure, homotetramer.

It localises to the cytoplasm. It carries out the reaction thymidine + ATP = dTMP + ADP + H(+). This is Thymidine kinase from Ureaplasma urealyticum serovar 10 (strain ATCC 33699 / Western).